The sequence spans 591 residues: Mono(ADP-ribosyl)transferase SpvB (591 aa).

The 204-residue stretch at 373 to 576 (PMMGGNSSRP…LRLSDDATAD (204 aa)) folds into the TR mART core domain. Active-site residues include Arg471, Ser501, and Glu538.

Belongs to the SpvB family.

The protein localises to the secreted. The enzyme catalyses L-arginyl-[protein] + NAD(+) = N(omega)-(ADP-D-ribosyl)-L-arginyl-[protein] + nicotinamide + H(+). Functionally, mono-ADP-ribosylates eukaryotic muscle and non-muscle actin on 'Arg-177'. ADP-ribosylation prevents the polymerization of G-actin to F-actin, causing actin filament depolymerization, destruction of the cytoskeleton and cytotoxicity. Does not possess NAD(+)-glycohydrolase activity, unlike most mART enzymes. The protein is Mono(ADP-ribosyl)transferase SpvB (spvB) of Salmonella typhimurium (strain 14028s / SGSC 2262).